The chain runs to 232 residues: 5'-methylthioadenosine/S-adenosylhomocysteine nucleosidase (232 aa).

E12 serves as the catalytic Proton acceptor. Substrate-binding positions include G78, M153, and 174–175 (ME). D198 (proton donor) is an active-site residue.

It belongs to the PNP/UDP phosphorylase family. MtnN subfamily.

It catalyses the reaction S-adenosyl-L-homocysteine + H2O = S-(5-deoxy-D-ribos-5-yl)-L-homocysteine + adenine. The catalysed reaction is S-methyl-5'-thioadenosine + H2O = 5-(methylsulfanyl)-D-ribose + adenine. It carries out the reaction 5'-deoxyadenosine + H2O = 5-deoxy-D-ribose + adenine. The protein operates within amino-acid biosynthesis; L-methionine biosynthesis via salvage pathway; S-methyl-5-thio-alpha-D-ribose 1-phosphate from S-methyl-5'-thioadenosine (hydrolase route): step 1/2. Functionally, catalyzes the irreversible cleavage of the glycosidic bond in both 5'-methylthioadenosine (MTA) and S-adenosylhomocysteine (SAH/AdoHcy) to adenine and the corresponding thioribose, 5'-methylthioribose and S-ribosylhomocysteine, respectively. Also cleaves 5'-deoxyadenosine, a toxic by-product of radical S-adenosylmethionine (SAM) enzymes, into 5-deoxyribose and adenine. In Geobacillus sp. (strain WCH70), this protein is 5'-methylthioadenosine/S-adenosylhomocysteine nucleosidase.